The sequence spans 279 residues: Putative hydro-lyase GDI0188/Gdia_2258 (279 aa).

This sequence belongs to the D-glutamate cyclase family.

The sequence is that of Putative hydro-lyase GDI0188/Gdia_2258 from Gluconacetobacter diazotrophicus (strain ATCC 49037 / DSM 5601 / CCUG 37298 / CIP 103539 / LMG 7603 / PAl5).